Here is a 420-residue protein sequence, read N- to C-terminus: Anaerobic glycerol-3-phosphate dehydrogenase subunit B (420 aa).

The protein belongs to the anaerobic G-3-P dehydrogenase subunit B family. Composed of a catalytic GlpA/B dimer and of membrane bound GlpC. FMN serves as cofactor.

The enzyme catalyses a quinone + sn-glycerol 3-phosphate = dihydroxyacetone phosphate + a quinol. The protein operates within polyol metabolism; glycerol degradation via glycerol kinase pathway; glycerone phosphate from sn-glycerol 3-phosphate (anaerobic route): step 1/1. In terms of biological role, conversion of glycerol 3-phosphate to dihydroxyacetone. Uses fumarate or nitrate as electron acceptor. The sequence is that of Anaerobic glycerol-3-phosphate dehydrogenase subunit B from Pectobacterium atrosepticum (strain SCRI 1043 / ATCC BAA-672) (Erwinia carotovora subsp. atroseptica).